Consider the following 151-residue polypeptide: Ribosomal RNA large subunit methyltransferase H (151 aa).

Residues Gly100 and 119-124 (LSRMTF) each bind S-adenosyl-L-methionine.

Belongs to the RNA methyltransferase RlmH family. In terms of assembly, homodimer.

The protein resides in the cytoplasm. It catalyses the reaction pseudouridine(1915) in 23S rRNA + S-adenosyl-L-methionine = N(3)-methylpseudouridine(1915) in 23S rRNA + S-adenosyl-L-homocysteine + H(+). Specifically methylates the pseudouridine at position 1915 (m3Psi1915) in 23S rRNA. The protein is Ribosomal RNA large subunit methyltransferase H of Thermotoga neapolitana (strain ATCC 49049 / DSM 4359 / NBRC 107923 / NS-E).